Reading from the N-terminus, the 88-residue chain is MAASPAPAVDPSSVAADQLKSIIERIERLEEEKAGIAGDIKDVYAEAKANGFDVKVLRKIISLRKRDHDERQEEEAILELYLQALGMA.

It belongs to the UPF0335 family.

The polypeptide is UPF0335 protein MexAM1_META1p2947 (Methylorubrum extorquens (strain ATCC 14718 / DSM 1338 / JCM 2805 / NCIMB 9133 / AM1) (Methylobacterium extorquens)).